Here is a 287-residue protein sequence, read N- to C-terminus: Energy-coupling factor transporter ATP-binding protein EcfA2 (287 aa).

Positions 3–246 (VKFSQVSYVY…TNYVNQLHLD (244 aa)) constitute an ABC transporter domain. Residue 40–47 (GQTGSGKS) coordinates ATP.

Belongs to the ABC transporter superfamily. Energy-coupling factor EcfA family. In terms of assembly, forms a stable energy-coupling factor (ECF) transporter complex composed of 2 membrane-embedded substrate-binding proteins (S component), 2 ATP-binding proteins (A component) and 2 transmembrane proteins (T component).

Its subcellular location is the cell membrane. In terms of biological role, ATP-binding (A) component of a common energy-coupling factor (ECF) ABC-transporter complex. Unlike classic ABC transporters this ECF transporter provides the energy necessary to transport a number of different substrates. This Staphylococcus saprophyticus subsp. saprophyticus (strain ATCC 15305 / DSM 20229 / NCIMB 8711 / NCTC 7292 / S-41) protein is Energy-coupling factor transporter ATP-binding protein EcfA2.